The sequence spans 207 residues: Large ribosomal subunit protein uL4 (207 aa).

It belongs to the universal ribosomal protein uL4 family. In terms of assembly, part of the 50S ribosomal subunit.

Its function is as follows. One of the primary rRNA binding proteins, this protein initially binds near the 5'-end of the 23S rRNA. It is important during the early stages of 50S assembly. It makes multiple contacts with different domains of the 23S rRNA in the assembled 50S subunit and ribosome. In terms of biological role, forms part of the polypeptide exit tunnel. The chain is Large ribosomal subunit protein uL4 from Rickettsia peacockii (strain Rustic).